The chain runs to 879 residues: Alanine--tRNA ligase (879 aa).

Zn(2+)-binding residues include H566, H570, C668, and H672.

Belongs to the class-II aminoacyl-tRNA synthetase family. Zn(2+) is required as a cofactor.

The protein localises to the cytoplasm. It carries out the reaction tRNA(Ala) + L-alanine + ATP = L-alanyl-tRNA(Ala) + AMP + diphosphate. In terms of biological role, catalyzes the attachment of alanine to tRNA(Ala) in a two-step reaction: alanine is first activated by ATP to form Ala-AMP and then transferred to the acceptor end of tRNA(Ala). Also edits incorrectly charged Ser-tRNA(Ala) and Gly-tRNA(Ala) via its editing domain. The chain is Alanine--tRNA ligase from Clostridium tetani (strain Massachusetts / E88).